Consider the following 95-residue polypeptide: Large ribosomal subunit protein uL23 (95 aa).

Belongs to the universal ribosomal protein uL23 family. As to quaternary structure, part of the 50S ribosomal subunit. Contacts protein L29, and trigger factor when it is bound to the ribosome.

Functionally, one of the early assembly proteins it binds 23S rRNA. One of the proteins that surrounds the polypeptide exit tunnel on the outside of the ribosome. Forms the main docking site for trigger factor binding to the ribosome. This Heliobacterium modesticaldum (strain ATCC 51547 / Ice1) protein is Large ribosomal subunit protein uL23.